A 56-amino-acid chain; its full sequence is Large ribosomal subunit protein bL33 (56 aa).

Belongs to the bacterial ribosomal protein bL33 family.

The polypeptide is Large ribosomal subunit protein bL33 (Acidovorax sp. (strain JS42)).